The chain runs to 141 residues: Small ribosomal subunit protein uS12 (141 aa).

Asp89 is modified (3-methylthioaspartic acid). The disordered stretch occupies residues 104-141 (ASGAVGPSNTNKLNRNVSRSKYGVKRPKAGAKPASKAK). Over residues 110 to 122 (PSNTNKLNRNVSR) the composition is skewed to polar residues. A compositionally biased stretch (basic residues) spans 125–141 (YGVKRPKAGAKPASKAK).

Belongs to the universal ribosomal protein uS12 family. Part of the 30S ribosomal subunit. Contacts proteins S8 and S17. May interact with IF1 in the 30S initiation complex.

Its function is as follows. With S4 and S5 plays an important role in translational accuracy. Interacts with and stabilizes bases of the 16S rRNA that are involved in tRNA selection in the A site and with the mRNA backbone. Located at the interface of the 30S and 50S subunits, it traverses the body of the 30S subunit contacting proteins on the other side and probably holding the rRNA structure together. The combined cluster of proteins S8, S12 and S17 appears to hold together the shoulder and platform of the 30S subunit. This chain is Small ribosomal subunit protein uS12, found in Methylacidiphilum infernorum (isolate V4) (Methylokorus infernorum (strain V4)).